Here is a 130-residue protein sequence, read N- to C-terminus: Small ribosomal subunit protein uS9 (130 aa).

Belongs to the universal ribosomal protein uS9 family.

In Pectobacterium atrosepticum (strain SCRI 1043 / ATCC BAA-672) (Erwinia carotovora subsp. atroseptica), this protein is Small ribosomal subunit protein uS9.